The primary structure comprises 372 residues: Dual-specificity RNA methyltransferase RlmN (372 aa).

The Proton acceptor role is filled by glutamate 94. Positions 100 to 339 constitute a Radical SAM core domain; that stretch reads DGDRATLCVS…VTIRKTRGDD (240 aa). Residues cysteine 107 and cysteine 344 are joined by a disulfide bond. [4Fe-4S] cluster-binding residues include cysteine 114, cysteine 118, and cysteine 121. S-adenosyl-L-methionine-binding positions include 168–169, serine 200, 222–224, and asparagine 301; these read GE and SLH. Catalysis depends on cysteine 344, which acts as the S-methylcysteine intermediate.

Belongs to the radical SAM superfamily. RlmN family. The cofactor is [4Fe-4S] cluster.

The protein resides in the cytoplasm. It catalyses the reaction adenosine(2503) in 23S rRNA + 2 reduced [2Fe-2S]-[ferredoxin] + 2 S-adenosyl-L-methionine = 2-methyladenosine(2503) in 23S rRNA + 5'-deoxyadenosine + L-methionine + 2 oxidized [2Fe-2S]-[ferredoxin] + S-adenosyl-L-homocysteine. The catalysed reaction is adenosine(37) in tRNA + 2 reduced [2Fe-2S]-[ferredoxin] + 2 S-adenosyl-L-methionine = 2-methyladenosine(37) in tRNA + 5'-deoxyadenosine + L-methionine + 2 oxidized [2Fe-2S]-[ferredoxin] + S-adenosyl-L-homocysteine. Functionally, specifically methylates position 2 of adenine 2503 in 23S rRNA and position 2 of adenine 37 in tRNAs. m2A2503 modification seems to play a crucial role in the proofreading step occurring at the peptidyl transferase center and thus would serve to optimize ribosomal fidelity. The chain is Dual-specificity RNA methyltransferase RlmN from Aliivibrio fischeri (strain ATCC 700601 / ES114) (Vibrio fischeri).